The primary structure comprises 128 residues: MAVLGPKATLAAVFIGPFIVACMLGIGLVYLLQLQVQIFHVKDTIRVTGKPATVSYTTSTPVTPSATTLDGTTYTLIRPTSSYTRVYLGTPRGFDYSTFGPKTLDYVTNLNLILILVVHILLRHCPGI.

A helical membrane pass occupies residues 12-32 (AVFIGPFIVACMLGIGLVYLL).

The protein belongs to the coronaviruses ns4/ns4.8 protein family.

It localises to the host membrane. The sequence is that of Non-structural protein 4 from Murine coronavirus (strain A59) (MHV-A59).